The sequence spans 354 residues: LAS seventeen-binding protein 5 (354 aa).

Positions T15 to S161 constitute a VHS domain. Disordered regions lie at residues Y160–A184 and S296–I354. Over residues S296 to Y310 the composition is skewed to basic and acidic residues.

Belongs to the LSB5 family. As to quaternary structure, interacts with SLA1 and LAS17.

The protein localises to the cytoplasm. Its subcellular location is the cell cortex. The protein resides in the cytoskeleton. Functionally, essential for the organization of the actin cytoskeleton, fluid phase endocytosis and vesicle trafficking, together with YSC84. The polypeptide is LAS seventeen-binding protein 5 (LSB5) (Saccharomyces cerevisiae (strain ATCC 204508 / S288c) (Baker's yeast)).